The primary structure comprises 408 residues: Peptidase T (408 aa).

Position 78 (histidine 78) interacts with Zn(2+). Aspartate 80 is an active-site residue. A Zn(2+)-binding site is contributed by aspartate 140. The Proton acceptor role is filled by glutamate 173. Zn(2+)-binding residues include glutamate 174, aspartate 196, and histidine 379.

Belongs to the peptidase M20B family. The cofactor is Zn(2+).

It localises to the cytoplasm. The catalysed reaction is Release of the N-terminal residue from a tripeptide.. Cleaves the N-terminal amino acid of tripeptides. This chain is Peptidase T, found in Citrobacter koseri (strain ATCC BAA-895 / CDC 4225-83 / SGSC4696).